The sequence spans 570 residues: Sulfite reductase [NADPH] hemoprotein beta-component (570 aa).

C434, C440, C479, and C483 together coordinate [4Fe-4S] cluster. C483 is a siroheme binding site.

It belongs to the nitrite and sulfite reductase 4Fe-4S domain family. As to quaternary structure, alpha(8)-beta(8). The alpha component is a flavoprotein, the beta component is a hemoprotein. Requires siroheme as cofactor. The cofactor is [4Fe-4S] cluster.

The catalysed reaction is hydrogen sulfide + 3 NADP(+) + 3 H2O = sulfite + 3 NADPH + 4 H(+). Its pathway is sulfur metabolism; hydrogen sulfide biosynthesis; hydrogen sulfide from sulfite (NADPH route): step 1/1. Its function is as follows. Component of the sulfite reductase complex that catalyzes the 6-electron reduction of sulfite to sulfide. This is one of several activities required for the biosynthesis of L-cysteine from sulfate. The protein is Sulfite reductase [NADPH] hemoprotein beta-component of Shigella flexneri serotype 5b (strain 8401).